A 234-amino-acid chain; its full sequence is NLP effector protein Pc576423 (234 aa).

The first 18 residues, 1–18 (MNLRAIAVTFATFAGANA), serve as a signal peptide directing secretion. Asn-35 and Asn-66 each carry an N-linked (GlcNAc...) asparagine glycan. Positions 119–125 (GHRHDWE) match the Hepta-peptide GHRHDWE motif motif.

This sequence belongs to the Necrosis inducing protein (NPP1) family.

Its subcellular location is the secreted. Functionally, secreted effector that contributes strongly to virulence during infection by P.capsici. The chain is NLP effector protein Pc576423 from Phytophthora capsici.